Consider the following 226-residue polypeptide: Small ribosomal subunit protein uS3 (226 aa).

The KH type-2 domain maps to 39–107 (VRNFIRKKLA…PVHINIEEIR (69 aa)).

The protein belongs to the universal ribosomal protein uS3 family. In terms of assembly, part of the 30S ribosomal subunit. Forms a tight complex with proteins S10 and S14.

Functionally, binds the lower part of the 30S subunit head. Binds mRNA in the 70S ribosome, positioning it for translation. This Alkalilimnicola ehrlichii (strain ATCC BAA-1101 / DSM 17681 / MLHE-1) protein is Small ribosomal subunit protein uS3.